A 56-amino-acid chain; its full sequence is Large ribosomal subunit protein bL33 (56 aa).

This sequence belongs to the bacterial ribosomal protein bL33 family.

The sequence is that of Large ribosomal subunit protein bL33 from Anaplasma phagocytophilum (strain HZ).